The primary structure comprises 513 residues: 2-isopropylmalate synthase (513 aa).

In terms of domain architecture, Pyruvate carboxyltransferase spans 7–269 (VYIFDTTLRD…TTGIVTEELF (263 aa)). Residues aspartate 16, histidine 204, histidine 206, and asparagine 240 each contribute to the Mn(2+) site. The regulatory domain stretch occupies residues 393–513 (ALQFLSVHCG…KEEERTCPQL (121 aa)).

Belongs to the alpha-IPM synthase/homocitrate synthase family. LeuA type 1 subfamily. As to quaternary structure, homodimer. It depends on Mn(2+) as a cofactor.

The protein resides in the cytoplasm. The catalysed reaction is 3-methyl-2-oxobutanoate + acetyl-CoA + H2O = (2S)-2-isopropylmalate + CoA + H(+). The protein operates within amino-acid biosynthesis; L-leucine biosynthesis; L-leucine from 3-methyl-2-oxobutanoate: step 1/4. Its function is as follows. Catalyzes the condensation of the acetyl group of acetyl-CoA with 3-methyl-2-oxobutanoate (2-ketoisovalerate) to form 3-carboxy-3-hydroxy-4-methylpentanoate (2-isopropylmalate). This Solidesulfovibrio magneticus (strain ATCC 700980 / DSM 13731 / RS-1) (Desulfovibrio magneticus) protein is 2-isopropylmalate synthase.